A 480-amino-acid chain; its full sequence is Immune evasion protein OPG047 (480 aa).

In terms of domain architecture, BTB spans 10–90 (CKNILALSMT…SYTGKVYIDS (81 aa)). The region spanning 125-223 (CVECYMMGIE…NYLSPRGINN (99 aa)) is the BACK domain. Kelch repeat units lie at residues 273 to 319 (VVYL…PANN), 320 to 363 (KLYV…SINN), 365 to 408 (IYVM…VFGR), 410 to 447 (LFLV…IVDN), and 448 to 480 (KLLL…WDGK).

Belongs to the orthopoxvirus OPG047 family.

Functionally, might have a role in the suppression of host immune response. The protein is Immune evasion protein OPG047 (OPG047) of Vaccinia virus (strain Copenhagen) (VACV).